A 245-amino-acid polypeptide reads, in one-letter code: Probable proteasome subunit alpha type-2 (245 aa).

It belongs to the peptidase T1A family. In terms of assembly, the 26S proteasome consists of a 20S proteasome core and two 19S regulatory subunits. The 20S proteasome core is composed of 28 subunits that are arranged in four stacked rings, resulting in a barrel-shaped structure. The two end rings are each formed by seven alpha subunits, and the two central rings are each formed by seven beta subunits. The catalytic chamber with the active sites is on the inside of the barrel.

The protein resides in the cytoplasm. The protein localises to the nucleus. In terms of biological role, the proteasome is a multicatalytic proteinase complex which is characterized by its ability to cleave peptides with Arg, Phe, Tyr, Leu, and Glu adjacent to the leaving group at neutral or slightly basic pH. The proteasome has an ATP-dependent proteolytic activity. The polypeptide is Probable proteasome subunit alpha type-2 (pre8) (Schizosaccharomyces pombe (strain 972 / ATCC 24843) (Fission yeast)).